Here is a 277-residue protein sequence, read N- to C-terminus: Protein CUSTOS (277 aa).

3 disordered regions span residues 1–81, 108–182, and 238–277; these read MVAP…QTTP, TQQA…QRCR, and SVNGDPVLSGTKKKKKKKAKKAREASLCPPAECAAAEPKN. Residues 9 to 18 show a composition bias toward low complexity; it reads SDSESSSSDS. Phosphoserine is present on Ser-62. Basic and acidic residues predominate over residues 63-72; sequence RRREVNQHDE. Thr-80 carries the post-translational modification Phosphothreonine. A coiled-coil region spans residues 106–141; it reads KKTQQARLQQEAKEQQEAKEQQAAKEEQAAKKEEDG. The span at 115 to 142 shows a compositional bias: basic and acidic residues; it reads QEAKEQQEAKEQQAAKEEQAAKKEEDGF. A phosphoserine mark is found at Ser-158 and Ser-238. Basic residues predominate over residues 248–258; it reads TKKKKKKKAKK. The short motif at 249 to 256 is the Nucleolar localization signal (NLS) element; the sequence is KKKKKKKA. A compositionally biased stretch (low complexity) spans 265-277; the sequence is CPPAECAAAEPKN.

This sequence belongs to the CUSTOS family.

It is found in the nucleus envelope. Its function is as follows. Plays a role in the regulation of Wnt signaling pathway during early development. The chain is Protein CUSTOS from Rattus norvegicus (Rat).